The sequence spans 977 residues: MSVRLPLLLRQLGRQQLPSGPACRLRELCRSGSRSSSSGGGDPEGLRGRRLQDGQTFSSHGPGNPEAPGMDSIVRDVIHNSKEVLSLLQEKNPAFKPVLVVIQAGDDNLMKDMNQNLAKEAGLDITHICLPPDSGEDEIIDEILKINEDPRVHGLTLQISEDSLSNKVLNALKPEKDVDGVTDINLGKLVRGDAPECFVSPLAKAAVELVEKSGITLDGKKVLVVGAHGPLEAALQWLFQRKGSMTMSCPWATPQLPDKLREADIVVLGSPKPEEIPAVWIPSGTTILNCFHDFLSGKLSGGSPGVPVDKLIAEESVSLLAAALRIQNMVSSGRRWLREQQHRRWRLHCLKLQPLSPVPSDIEISRGQTPKAVDVLAKEIGLLADEIEIYGKSKAKVQLSLLERLKDQTDGKYVLVAGITPTPLGEGKSTVTIGLVQALTAHLKVNSFACLRQPSQGPTFGVKGGAAGGGYAQVIPMEEFNLHLTGDIHAITAANNLLAAAIDTRILHESTQTDKALYNRLVPLVNGVREFSEIQLSRLKKLGIHKTDPSTLTEEEVRKFARLNIDPATITWQRVLDTNDRFLRKITIGQGSTEKGYSRQAQFDIAVASEIMAVLALTDSLTDMKERLGRMVVASDKDGQPVTAEDLGVTGALTVLMKDAIKPNLMQTLEGTPVFVHAGPFANIAHGNSSVLADKIALKLVGEEGFVVTEAGFGADIGMEKFFNIKCRASGLVPNVVVLVATVRALKMHGGGPSVTAGVPLKKEYTEENIQLVADGCCNLQKQIQIAQLFGVPVVVALNVFKTDTRAEIDLVCELAKRAGAFDAVPCYHWSAGGKGSVDLARAVREAANKRSRFQFLYDVQLPIVEKIRVIAQTVYGAKDIELSPEAQSKIDRYTQQGFGNLPICMAKTHLSLSHEPDKKGVPRDFTLPISDVRASIGAGFIYPLVGTMSTMPGLPTRPCFYDIDLDTETEQVKGLF.

The N-terminal 31 residues, 1-31 (MSVRLPLLLRQLGRQQLPSGPACRLRELCRS), are a transit peptide targeting the mitochondrion. The tract at residues 29–71 (CRSGSRSSSSGGGDPEGLRGRRLQDGQTFSSHGPGNPEAPGMD) is disordered. The segment at 32–347 (GSRSSSSGGG…REQQHRRWRL (316 aa)) is methylenetetrahydrofolate dehydrogenase and cyclohydrolase. Lys188 carries the post-translational modification N6-acetyllysine; alternate. N6-succinyllysine; alternate is present on Lys188. Residues 348 to 977 (HCLKLQPLSP…TETEQVKGLF (630 aa)) form a formyltetrahydrofolate synthetase region. Position 356 is a phosphoserine (Ser356). 422–429 (TPLGEGKS) contributes to the ATP binding site. Lys595 bears the N6-succinyllysine mark.

In the N-terminal section; belongs to the tetrahydrofolate dehydrogenase/cyclohydrolase family. It in the C-terminal section; belongs to the formate--tetrahydrofolate ligase family. As to quaternary structure, homodimer.

The protein localises to the mitochondrion. The enzyme catalyses (6S)-5,6,7,8-tetrahydrofolate + formate + ATP = (6R)-10-formyltetrahydrofolate + ADP + phosphate. Its pathway is one-carbon metabolism; tetrahydrofolate interconversion. May provide the missing metabolic reaction required to link the mitochondria and the cytoplasm in the mammalian model of one-carbon folate metabolism complementing thus the enzymatic activities of MTHFD2. The sequence is that of Monofunctional C1-tetrahydrofolate synthase, mitochondrial (Mthfd1l) from Mus musculus (Mouse).